The following is a 164-amino-acid chain: MTKKDKKAKGPKMSTITTKSGESLKVFEDLHDFETYLKGETEDQEFDHVHCQLKYYPPFVLHDAHDDPEKIKETANSHSKKFVRHLHQHVEKHLLKDIKTAINKPELKFHDKKKQESFDRIVWNYGEETELNAKKFKVSVEVVCKHDGAMVDVDYRTEPLQPLI.

Belongs to the RGI1 family.

Its subcellular location is the cytoplasm. Involved in the control of energetic metabolism and significantly contribute to cell fitness, especially under respiratory growth conditions. The protein is Respiratory growth induced protein 2 (RGI2) of Saccharomyces cerevisiae (strain RM11-1a) (Baker's yeast).